We begin with the raw amino-acid sequence, 570 residues long: MRVSKYLLSTQKETPANAEVISHQLMLRAGMIRRNASGLYSYLPTGLRVLRKVEAIVREEMNKAGAIEILMPMVQPADLWVETGRWDKFGPELLRFKDRHNRDFVLGPTHEEVITDLIRKEVSSYKQLPLNLYQIQTKFRDEVRPRFGVMRSREFLMKDAYSFHLDVDTMNETYEAMYQAYSNILSRMGLAFRPVLADTGSIGGSMSHEFHVLAQSGEDLIAYSTGSDYAANIEKAESPMPTEARGSATEELRLVDTPNAKTIAELVEQFGLDITKTVKTLIVKGATEEAPLVALIVRGDHELNEIKADKLDLVASPLEFAPEALIRDAIGAGPGSLGPVGLNMPIIIDHSVSVMSDFAAGANQDDKHYFGINWERDLPLAQAADIRNVVEGEPTPDGLGTYAMARGIEVGHIFQLGTNYSKSMNATVLDENGKSQVLLMGCYGVGVSRIVAAAIEQNFDDRGIVWPEAIAPFSVGILPMNMHKSHRVTDIAEQLYKDLSAAGIDVLLDDRKERPGVMFADMELIGIPHTVVIGDRNIDAGVFEYKNRRTGEKQDVPFDQIVDFLKNLQA.

Belongs to the class-II aminoacyl-tRNA synthetase family. ProS type 1 subfamily. As to quaternary structure, homodimer.

Its subcellular location is the cytoplasm. It carries out the reaction tRNA(Pro) + L-proline + ATP = L-prolyl-tRNA(Pro) + AMP + diphosphate. Its function is as follows. Catalyzes the attachment of proline to tRNA(Pro) in a two-step reaction: proline is first activated by ATP to form Pro-AMP and then transferred to the acceptor end of tRNA(Pro). As ProRS can inadvertently accommodate and process non-cognate amino acids such as alanine and cysteine, to avoid such errors it has two additional distinct editing activities against alanine. One activity is designated as 'pretransfer' editing and involves the tRNA(Pro)-independent hydrolysis of activated Ala-AMP. The other activity is designated 'posttransfer' editing and involves deacylation of mischarged Ala-tRNA(Pro). The misacylated Cys-tRNA(Pro) is not edited by ProRS. This Shewanella sp. (strain MR-7) protein is Proline--tRNA ligase.